The following is a 306-amino-acid chain: Porphobilinogen deaminase (306 aa).

Cys-239 carries the post-translational modification S-(dipyrrolylmethanemethyl)cysteine.

Belongs to the HMBS family. As to quaternary structure, monomer. It depends on dipyrromethane as a cofactor.

The enzyme catalyses 4 porphobilinogen + H2O = hydroxymethylbilane + 4 NH4(+). Its pathway is porphyrin-containing compound metabolism; protoporphyrin-IX biosynthesis; coproporphyrinogen-III from 5-aminolevulinate: step 2/4. Functionally, tetrapolymerization of the monopyrrole PBG into the hydroxymethylbilane pre-uroporphyrinogen in several discrete steps. The protein is Porphobilinogen deaminase of Helicobacter pylori (strain HPAG1).